Here is a 443-residue protein sequence, read N- to C-terminus: Xaa-Pro dipeptidase (443 aa).

D246, D257, H339, E384, and E423 together coordinate Mn(2+).

It belongs to the peptidase M24B family. Bacterial-type prolidase subfamily. Requires Mn(2+) as cofactor.

The catalysed reaction is Xaa-L-Pro dipeptide + H2O = an L-alpha-amino acid + L-proline. Functionally, splits dipeptides with a prolyl residue in the C-terminal position. In Escherichia coli O8 (strain IAI1), this protein is Xaa-Pro dipeptidase.